The sequence spans 199 residues: dITP/XTP pyrophosphatase (199 aa).

8 to 13 (THNRNK) lines the substrate pocket. Asp-68 (proton acceptor) is an active-site residue. Asp-68 is a binding site for Mg(2+). Substrate-binding positions include Ser-69, 151-154 (HGYD), Lys-174, and 179-180 (HR).

It belongs to the HAM1 NTPase family. As to quaternary structure, homodimer. Mg(2+) is required as a cofactor.

It catalyses the reaction XTP + H2O = XMP + diphosphate + H(+). It carries out the reaction dITP + H2O = dIMP + diphosphate + H(+). The enzyme catalyses ITP + H2O = IMP + diphosphate + H(+). In terms of biological role, pyrophosphatase that catalyzes the hydrolysis of nucleoside triphosphates to their monophosphate derivatives, with a high preference for the non-canonical purine nucleotides XTP (xanthosine triphosphate), dITP (deoxyinosine triphosphate) and ITP. Seems to function as a house-cleaning enzyme that removes non-canonical purine nucleotides from the nucleotide pool, thus preventing their incorporation into DNA/RNA and avoiding chromosomal lesions. This Leifsonia xyli subsp. xyli (strain CTCB07) protein is dITP/XTP pyrophosphatase.